A 200-amino-acid polypeptide reads, in one-letter code: Dipicolinate synthase subunit B (200 aa).

Dipicolinate synthase likely consists of DpaA and DpaB, since both proteins are required for DPA synthesis.

The enzyme catalyses (S)-2,3-dihydrodipicolinate + NADP(+) = dipicolinate + NADPH + H(+). Together with DpaA, catalyzes the conversion of dihydrodipicolinate to dipicolinate (DPA), which constitutes up to 10% of the dry weight of the spore. This chain is Dipicolinate synthase subunit B (dpaB), found in Bacillus subtilis (strain 168).